We begin with the raw amino-acid sequence, 75 residues long: uncharacterized protein (75 aa).

This is an uncharacterized protein from Escherichia coli O6:H1 (strain CFT073 / ATCC 700928 / UPEC).